The primary structure comprises 246 residues: MAGHSKWANTKHRKAAQDAKRGKIFTKIIRELVTAARLGGGDPGSNPRLRAAIDKALSNNMTRDTLNRAIARGVGGDEDANMETIIYEGYGPGGTAVMVECLSDNRNRTVAEVRHAFSKCGGNLGTDGSVAYLFSKKGVISFEAGDEDTIMEAALEAGAEDVVTYDDGAIDVYTAWEEMGAVRDALEAAGLKADNAEVSMIPSTKADMDAETAPKLLRLIDMLEDCDDVQEVYHNGEISDEVAATL.

The protein belongs to the TACO1 family.

It is found in the cytoplasm. The sequence is that of Probable transcriptional regulatory protein ESA_01378 from Cronobacter sakazakii (strain ATCC BAA-894) (Enterobacter sakazakii).